The chain runs to 331 residues: Eukaryotic translation initiation factor 2 subunit 2 (331 aa).

2 disordered regions span residues Met-1–Phe-75 and Ala-97–Met-120. Ser-2 carries the N-acetylserine modification. Phosphoserine occurs at positions 2 and 13. A compositionally biased stretch (basic residues) spans Ser-13 to Pro-22. Thr-36 carries the phosphothreonine modification. Positions Glu-40–Glu-51 are enriched in basic and acidic residues. A Phosphoserine modification is found at Ser-67. Lys-102 is covalently cross-linked (Glycyl lysine isopeptide (Lys-Gly) (interchain with G-Cter in SUMO2)). Ser-105 carries the phosphoserine modification. A compositionally biased stretch (acidic residues) spans Asp-106–Asp-118. 2 positions are modified to phosphoserine: Ser-158 and Ser-216. Residues Lys-263 and Lys-291 each carry the N6-acetyllysine modification. A C4-type zinc finger spans residues Cys-279 to Cys-303.

This sequence belongs to the eIF-2-beta/eIF-5 family. Eukaryotic translation initiation factor 2 eIF2 is a heterotrimeric complex composed of an alpha (EIF2S1), a beta (EIF2S2) and a gamma (EIF2S3) chain. eIF2 is member of the 43S pre-initiation complex (43S PIC). eIF2 forms a complex with at least CELF1/CUGBP1, CALR, CALR3, EIF2S1, EIF2S2, HSP90B1 and HSPA5. Interacts with BZW2/5MP1. Interacts with EIF5.

It localises to the cytoplasm. Its subcellular location is the cytosol. In terms of biological role, component of the eIF2 complex that functions in the early steps of protein synthesis by forming a ternary complex with GTP and initiator tRNA. This complex binds to a 40S ribosomal subunit, followed by mRNA binding to form the 43S pre-initiation complex (43S PIC). Junction of the 60S ribosomal subunit to form the 80S initiation complex is preceded by hydrolysis of the GTP bound to eIF2 and release of an eIF2-GDP binary complex. In order for eIF2 to recycle and catalyze another round of initiation, the GDP bound to eIF2 must exchange with GTP by way of a reaction catalyzed by eIF2B. The protein is Eukaryotic translation initiation factor 2 subunit 2 (Eif2s2) of Mus musculus (Mouse).